A 211-amino-acid polypeptide reads, in one-letter code: MVMEYLVLEKRLKRLREVLEKRQKDLIVFADNVKNEHNFSAIVRTCDAVGVLYLYYYHAEGKKAKINEGITQGSHKWVFIEKVDNPVQKLLEFKNRGFQIVATWLSKESVNFREVDYTKPTVLVVGNELQGVSPEIVEIADKKIVIPMYGMAQSLNVSVATGIILYEAQRQREEKGMYSRPSLSEEEIQKILKKWAYEDVIKERKRTLSTS.

Residues Thr-103, Ile-146, and Leu-155 each contribute to the S-adenosyl-L-methionine site.

The protein belongs to the class IV-like SAM-binding methyltransferase superfamily. RNA methyltransferase TrmH family. As to quaternary structure, homodimer.

The catalysed reaction is guanosine(18) in tRNA + S-adenosyl-L-methionine = 2'-O-methylguanosine(18) in tRNA + S-adenosyl-L-homocysteine + H(+). Its function is as follows. Catalyzes the 2'-O methylation of guanosine at position 18 in tRNA. Type II methylase, which methylates only a subset of tRNA species. This is tRNA (guanosine(18)-2'-O)-methyltransferase from Aquifex aeolicus (strain VF5).